Here is a 182-residue protein sequence, read N- to C-terminus: Ribulose bisphosphate carboxylase small subunit, chloroplastic (182 aa).

Residues 1–58 constitute a chloroplast transit peptide; that stretch reads MASSMLSTATVASINRVSPAQATMVAPFTGLKSTPVFPTTRKTNSDITSITSNGGKVQ.

The protein belongs to the RuBisCO small chain family. As to quaternary structure, heterohexadecamer of 8 large and 8 small subunits.

Its subcellular location is the plastid. It is found in the chloroplast. In terms of biological role, ruBisCO catalyzes two reactions: the carboxylation of D-ribulose 1,5-bisphosphate, the primary event in carbon dioxide fixation, as well as the oxidative fragmentation of the pentose substrate. Both reactions occur simultaneously and in competition at the same active site. Although the small subunit is not catalytic it is essential for maximal activity. This Manihot esculenta (Cassava) protein is Ribulose bisphosphate carboxylase small subunit, chloroplastic.